Reading from the N-terminus, the 329-residue chain is 36 kDa antigen (329 aa).

The helical transmembrane segment at Ala-11 to Tyr-31 threads the bilayer.

Belongs to the membrane fusion protein (MFP) (TC 8.A.1) family.

The protein resides in the membrane. This chain is 36 kDa antigen, found in Helicobacter pylori (strain J99 / ATCC 700824) (Campylobacter pylori J99).